The sequence spans 476 residues: Viral inhibitor of caspase-8-induced apoptosis (476 aa).

The protein belongs to the herpesviridae US22 family. As to quaternary structure, interacts with host pro-caspase-8/CASP8; this interaction inhibits CASP8 activation.

Plays a role in the inhibition of apoptosis by interacting with the pro-domain of pro-caspase-8/CASP8 and thus preventing its activation. The polypeptide is Viral inhibitor of caspase-8-induced apoptosis (UL36) (Human cytomegalovirus (strain Merlin) (HHV-5)).